Reading from the N-terminus, the 649-residue chain is ABC transporter G family member 5 (649 aa).

In terms of domain architecture, ABC transporter spans 42-284 (VKTEEESLKL…LRSNGLHPPL (243 aa)). Residue 80-87 (GPSGAGKS) coordinates ATP. The tract at residues 308-336 (SRRAAHVLTPQTTLQEKRSEDSQGESKSG) is disordered. Residues 371–581 (EETMILTHRF…PFEGFLINEF (211 aa)) enclose the ABC transmembrane type-2 domain. A run of 6 helical transmembrane segments spans residues 390-410 (LFAC…LIFH), 425-445 (LFAF…PIFL), 474-494 (LPFL…LVGL), 506-526 (LLIW…SALV), 529-549 (FIVG…FSGY), and 617-637 (VVIM…ILRC).

Belongs to the ABC transporter superfamily. ABCG family. Eye pigment precursor importer (TC 3.A.1.204) subfamily.

It localises to the membrane. This chain is ABC transporter G family member 5 (ABCG5), found in Arabidopsis thaliana (Mouse-ear cress).